The following is a 134-amino-acid chain: Peroxisomal testis-specific protein 1 (134 aa).

The Microbody targeting signal motif lies at 131 to 134 (NHLL).

It is found in the peroxisome. The chain is Peroxisomal testis-specific protein 1 (PXT1) from Homo sapiens (Human).